The primary structure comprises 211 residues: MSGQSKYYDYYMVEGEDVKELIQSYDTINDQRNSILTTAAEKVGAIAWTTARSWGGEGGLLQSFVWEKGYEFPCQITIKREDFLDGKRVVIARGKGNTKEGRAYNKELDAIMHNANAKLKSLPEWNYYITNHYGIMRTGIGGQSGRGFGFVMLSTYGGKHPQRDDCLIFAIPNNKEERHGVVVIPDAFKKITYGQFYDIANAKEDEEETAE.

The sequence is that of Eac protein (eac) from Salmonella typhimurium (Bacteriophage P22).